A 340-amino-acid polypeptide reads, in one-letter code: Undecaprenyl-phosphate 4-deoxy-4-formamido-L-arabinose transferase (340 aa).

2 helical membrane passes run 235–255 (LSIVGFAMAGLGVLFAAALIF) and 269–289 (LFVLFAVLFVFTGGQFIGMGL).

Belongs to the glycosyltransferase 2 family.

It is found in the cell inner membrane. The enzyme catalyses UDP-4-deoxy-4-formamido-beta-L-arabinose + di-trans,octa-cis-undecaprenyl phosphate = 4-deoxy-4-formamido-alpha-L-arabinopyranosyl di-trans,octa-cis-undecaprenyl phosphate + UDP. It functions in the pathway glycolipid biosynthesis; 4-amino-4-deoxy-alpha-L-arabinose undecaprenyl phosphate biosynthesis; 4-amino-4-deoxy-alpha-L-arabinose undecaprenyl phosphate from UDP-4-deoxy-4-formamido-beta-L-arabinose and undecaprenyl phosphate: step 1/2. Its pathway is bacterial outer membrane biogenesis; lipopolysaccharide biosynthesis. In terms of biological role, catalyzes the transfer of 4-deoxy-4-formamido-L-arabinose from UDP to undecaprenyl phosphate. The modified arabinose is attached to lipid A and is required for resistance to polymyxin and cationic antimicrobial peptides. The chain is Undecaprenyl-phosphate 4-deoxy-4-formamido-L-arabinose transferase from Pseudomonas fluorescens (strain Pf0-1).